Here is a 620-residue protein sequence, read N- to C-terminus: Origin recognition complex subunit 2 (620 aa).

The segment at 1 to 184 is disordered; that stretch reads MLNGEDFVEH…PSKKSLTTNH (184 aa). Residues 13–23 show a composition bias toward polar residues; it reads ILSSPAKSRNV. Residues 26 to 36 show a composition bias toward basic and acidic residues; that stretch reads KRVDPHGERQL. T60 is modified (phosphothreonine). The span at 83-101 shows a compositional bias: basic and acidic residues; it reads KIQEELTDRIKKDEKDTIS. Over residues 113-127 the composition is skewed to polar residues; that stretch reads SGNVNEESKTSNNKQ. Residues 128–143 are compositionally biased toward basic and acidic residues; it reads VMEKTGIKEKREREKI. Over residues 145–166 the composition is skewed to polar residues; it reads VATTTYEDNVTPQTDDNFVSNS. T187 bears the Phosphothreonine mark. S188 bears the Phosphoserine mark. The span at 204 to 218 shows a compositional bias: polar residues; the sequence is STSPGKLTLSRNFTP. Residues 204–225 are disordered; it reads STSPGKLTLSRNFTPTPVPKNK.

This sequence belongs to the ORC2 family. In terms of assembly, component of the origin recognition complex (ORC) composed of at least ORC1, ORC2, ORC3, ORC4, ORC5 and ORC6. Interacts with MCM10 and TAH11.

It localises to the nucleus. Functionally, component of the origin recognition complex (ORC) that binds origins of replication. It has a role in both chromosomal replication and mating type transcriptional silencing. Binds to the ARS consensus sequence (ACS) of origins of replication. This Saccharomyces cerevisiae (strain ATCC 204508 / S288c) (Baker's yeast) protein is Origin recognition complex subunit 2 (ORC2).